The chain runs to 313 residues: NAD-capped RNA hydrolase NudC (313 aa).

Arg-111 lines the substrate pocket. One can recognise a Nudix hydrolase domain in the interval 168–293 (PRIDPAVICL…DWSSASESKL (126 aa)). Positions 202, 218, and 222 each coordinate a divalent metal cation. The Nudix box signature appears at 203–224 (GFVEAGESFEVCVAREIREEIG). Residue 236–243 (QQWPFPRS) participates in substrate binding. Glu-264 provides a ligand contact to a divalent metal cation.

The protein belongs to the Nudix hydrolase family. NudC subfamily. In terms of assembly, homodimer. Mg(2+) serves as cofactor. It depends on Mn(2+) as a cofactor.

It carries out the reaction a 5'-end NAD(+)-phospho-ribonucleoside in mRNA + H2O = a 5'-end phospho-adenosine-phospho-ribonucleoside in mRNA + beta-nicotinamide D-ribonucleotide + 2 H(+). It catalyses the reaction NAD(+) + H2O = beta-nicotinamide D-ribonucleotide + AMP + 2 H(+). The catalysed reaction is NADH + H2O = reduced beta-nicotinamide D-ribonucleotide + AMP + 2 H(+). Its function is as follows. mRNA decapping enzyme that specifically removes the nicotinamide adenine dinucleotide (NAD) cap from a subset of mRNAs by hydrolyzing the diphosphate linkage to produce nicotinamide mononucleotide (NMN) and 5' monophosphate mRNA. The NAD-cap is present at the 5'-end of some mRNAs and stabilizes RNA against 5'-processing. Has preference for mRNAs with a 5'-end purine. Catalyzes the hydrolysis of a broad range of dinucleotide pyrophosphates. The sequence is that of NAD-capped RNA hydrolase NudC from Mycobacterium tuberculosis (strain ATCC 25177 / H37Ra).